The primary structure comprises 742 residues: MEHTYQYAWIIPLLPLPVTMSIGFGLLLIPTATKSIRRMWAFPSVLLLSIGLIFSANLAFQQINGSFIYQYLWSWTINNDFSLEFGYFIDPLTSVMLILITTVGIMVLIYSDNYMSHDQGYLRFFAYMSFFNASMLGLVTSSNLIQIYIFWELVGMCSYLLIGFWFTRPSAASACQKAFITNRVGDFGLLLGILGFYWITGSFEFRDLFETFNKLNNEGNSLFPTLCAFLLFLGAIAKSAQFPLHVWLPDAMEGPTPISALIHAATMVAAGIFLVARLLPLFTGIPYIMNIISLIGVITLLLGATLALAQRDIKRSLAYSTMSQLGYIMLALGLGSYRAALFHLITHAYSKALLFLGSGSIIHSMEPLVGYSPDKSQNMVLMGGLTRYIPITRTTFLLGTLSLCGIPPLACFWSKDEILSESWLYSPSFAVIAYFTAGLTAFYMFRVYLLTFEGSLHVNFQNYSGTQNTSAYSISLWGKEEPKSVNSLFSTMKTNNETKNILFFEKNIYQFNENVINQMRDFTTPFLRKNTSMYPHESDNTMLYPLLILVVFTLFVGFIGIPLVQGEGEIDLNLLSKWLAPSKNLLYPNSEDSIDLYDFFINASFSVSIATGGIFLAFIFYGSPYSPLQNLDLMNLLVKIGTKTKRVSLDKIANIVYNWSHNRGYIDIFYTNVVTQSIRELAKLTQFFDRYIIDGITNSVGVLSFFAGEAIKYLVGGGRISFYLFFYLFFILIFVYFLFLSL.

The next 16 membrane-spanning stretches (helical) occupy residues W9–I29, W40–F60, I89–I109, F125–I145, I147–T167, G185–F205, A228–L248, T256–A276, I288–L308, L325–I345, A352–S372, T394–S414, W423–Y443, Y544–V564, F599–I619, and I720–L740.

This sequence belongs to the complex I subunit 5 family. In terms of assembly, NDH is composed of at least 16 different subunits, 5 of which are encoded in the nucleus.

Its subcellular location is the plastid. The protein localises to the chloroplast thylakoid membrane. The catalysed reaction is a plastoquinone + NADH + (n+1) H(+)(in) = a plastoquinol + NAD(+) + n H(+)(out). It carries out the reaction a plastoquinone + NADPH + (n+1) H(+)(in) = a plastoquinol + NADP(+) + n H(+)(out). In terms of biological role, NDH shuttles electrons from NAD(P)H:plastoquinone, via FMN and iron-sulfur (Fe-S) centers, to quinones in the photosynthetic chain and possibly in a chloroplast respiratory chain. The immediate electron acceptor for the enzyme in this species is believed to be plastoquinone. Couples the redox reaction to proton translocation, and thus conserves the redox energy in a proton gradient. In Lemna minor (Common duckweed), this protein is NAD(P)H-quinone oxidoreductase subunit 5, chloroplastic (ndhF).